The sequence spans 61 residues: Large ribosomal subunit protein uL30 (61 aa).

This sequence belongs to the universal ribosomal protein uL30 family. Part of the 50S ribosomal subunit.

The chain is Large ribosomal subunit protein uL30 from Chlorobium luteolum (strain DSM 273 / BCRC 81028 / 2530) (Pelodictyon luteolum).